Reading from the N-terminus, the 383-residue chain is Acetyl-CoA acetyltransferase (383 aa).

Cys85 functions as the Acyl-thioester intermediate in the catalytic mechanism. The CoA site is built by Cys206, Ser207, Ile209, and Lys328. The active-site Proton acceptor is the His332.

This sequence belongs to the thiolase-like superfamily. Thiolase family. In terms of assembly, interacts with HMG-CoA synthase (HMGCS) that catalyzes the second step in the pathway and with a DUF35 protein. The acetoacetyl-CoA thiolase/HMG-CoA synthase complex channels the intermediate via a fused CoA-binding site, which allows for efficient coupling of the endergonic thiolase reaction with the exergonic HMGCS reaction.

It carries out the reaction 2 acetyl-CoA = acetoacetyl-CoA + CoA. It participates in metabolic intermediate biosynthesis; (R)-mevalonate biosynthesis; (R)-mevalonate from acetyl-CoA: step 1/3. Functionally, catalyzes the condensation of two acetyl-coA molecules into acetoacetyl-CoA. Functions in the mevalonate (MVA) pathway leading to isopentenyl diphosphate (IPP), a key precursor for the biosynthesis of isoprenoid compounds that are building blocks of archaeal membrane lipids. This is Acetyl-CoA acetyltransferase from Methanothermobacter thermautotrophicus (strain ATCC 29096 / DSM 1053 / JCM 10044 / NBRC 100330 / Delta H) (Methanobacterium thermoautotrophicum).